Here is a 70-residue protein sequence, read N- to C-terminus: Large ribosomal subunit protein eL38 (70 aa).

Belongs to the eukaryotic ribosomal protein eL38 family.

The polypeptide is Large ribosomal subunit protein eL38 (RpL38) (Anopheles gambiae (African malaria mosquito)).